Here is a 428-residue protein sequence, read N- to C-terminus: Isocitrate lyase 1 (428 aa).

Residue 91–93 coordinates substrate; the sequence is SGW. Asp-153 provides a ligand contact to Mg(2+). Cys-191 (proton acceptor) is an active-site residue. Substrate-binding positions include 192–193, Arg-228, 313–317, and Thr-347; these read GH and NCSPS.

It belongs to the isocitrate lyase/PEP mutase superfamily. Isocitrate lyase family. In terms of assembly, homotetramer. The cofactor is Mg(2+).

It carries out the reaction D-threo-isocitrate = glyoxylate + succinate. It catalyses the reaction (2S,3R)-3-hydroxybutane-1,2,3-tricarboxylate = pyruvate + succinate. It functions in the pathway carbohydrate metabolism; glyoxylate cycle; (S)-malate from isocitrate: step 1/2. Involved in the persistence and virulence of M.tuberculosis. Catalyzes the reversible formation of succinate and glyoxylate from isocitrate, a key step of the glyoxylate cycle, which operates as an anaplerotic route for replenishing the tricarboxylic acid cycle during growth on fatty acid substrates. It also catalyzes the formation of pyruvate and succinate from 2-methylisocitrate, a key step in the methylcitrate cycle (propionate degradation route). The protein is Isocitrate lyase 1 (icl1) of Mycobacterium tuberculosis (strain ATCC 35801 / TMC 107 / Erdman).